Consider the following 396-residue polypeptide: Acetate kinase (396 aa).

Residue N7 participates in Mg(2+) binding. K14 is an ATP binding site. R89 is a binding site for substrate. D146 (proton donor/acceptor) is an active-site residue. ATP is bound by residues 206–210, 280–282, and 328–332; these read HLGNG, DLR, and GIGEN. E382 lines the Mg(2+) pocket.

It belongs to the acetokinase family. In terms of assembly, homodimer. The cofactor is Mg(2+). Mn(2+) serves as cofactor.

Its subcellular location is the cytoplasm. It catalyses the reaction acetate + ATP = acetyl phosphate + ADP. It participates in metabolic intermediate biosynthesis; acetyl-CoA biosynthesis; acetyl-CoA from acetate: step 1/2. Its function is as follows. Catalyzes the formation of acetyl phosphate from acetate and ATP. Can also catalyze the reverse reaction. This is Acetate kinase from Maridesulfovibrio salexigens (strain ATCC 14822 / DSM 2638 / NCIMB 8403 / VKM B-1763) (Desulfovibrio salexigens).